A 541-amino-acid polypeptide reads, in one-letter code: Arginine--tRNA ligase (541 aa).

Positions Ala119–His129 match the 'HIGH' region motif.

Belongs to the class-I aminoacyl-tRNA synthetase family. As to quaternary structure, monomer.

Its subcellular location is the cytoplasm. It catalyses the reaction tRNA(Arg) + L-arginine + ATP = L-arginyl-tRNA(Arg) + AMP + diphosphate. In Helicobacter acinonychis (strain Sheeba), this protein is Arginine--tRNA ligase.